The primary structure comprises 484 residues: Regulator of G-protein signaling 9 (484 aa).

Residues 30-105 form the DEP domain; the sequence is PDTGVKTQSQ…PDSSLYRFQT (76 aa). In terms of domain architecture, G protein gamma spans 219-280; that stretch reads ITAVKKEIMY…ITDDTQFWDL (62 aa). In terms of domain architecture, RGS spans 299–414; that stretch reads NFSELIRDPK…LKSPIYKEML (116 aa).

In terms of assembly, heterodimer with Gbeta5. Interacts with RGS7BP, leading to regulate the subcellular location of the heterodimer formed with Gbeta5. Component of the RGS9-1-Gbeta5 complex composed of RGS9 (RGS9-1), Gbeta5 (GNB5) and RGS9BP. Phosphorylation is decreased by light exposition.

The protein resides in the membrane. Its function is as follows. Inhibits signal transduction by increasing the GTPase activity of G protein alpha subunits thereby driving them into their inactive GDP-bound form. Binds to G(t)-alpha. Involved in phototransduction; key element in the recovery phase of visual transduction. This is Regulator of G-protein signaling 9 from Tamias striatus (Eastern chipmunk).